Reading from the N-terminus, the 494-residue chain is Cobyric acid synthase (494 aa).

Residues 252-444 (DLNIAVIRLP…LHGLFDNGPW (193 aa)) enclose the GATase cobBQ-type domain. Cysteine 333 acts as the Nucleophile in catalysis. Residue histidine 436 is part of the active site.

Belongs to the CobB/CobQ family. CobQ subfamily.

The protein operates within cofactor biosynthesis; adenosylcobalamin biosynthesis. Catalyzes amidations at positions B, D, E, and G on adenosylcobyrinic A,C-diamide. NH(2) groups are provided by glutamine, and one molecule of ATP is hydrogenolyzed for each amidation. This Nostoc punctiforme (strain ATCC 29133 / PCC 73102) protein is Cobyric acid synthase.